A 619-amino-acid chain; its full sequence is Chaperone protein HscA homolog (619 aa).

It belongs to the heat shock protein 70 family.

Functionally, chaperone involved in the maturation of iron-sulfur cluster-containing proteins. Has a low intrinsic ATPase activity which is markedly stimulated by HscB. The sequence is that of Chaperone protein HscA homolog from Acinetobacter baumannii (strain AB0057).